A 117-amino-acid polypeptide reads, in one-letter code: Immunoglobulin heavy variable 4-38-2 (117 aa).

A signal peptide spans 1–19 (MKHLWFFLLLVAAPRWVLS). The segment at 20–44 (QVQLQESGPGLVKPSETLSLTCTVS) is framework-1. The region spanning 20–117 (QVQLQESGPG…ADTAVYYCAR (98 aa)) is the Ig-like domain. An intrachain disulfide couples Cys-41 to Cys-115. The tract at residues 45–53 (GYSISSGYY) is complementarity-determining-1. The tract at residues 54–70 (WGWIRQPPGKGLEWIGS) is framework-2. The interval 71 to 77 (IYHSGST) is complementarity-determining-2. Positions 78 to 115 (YYNPSLKSRVTISVDTSKNQFSLKLSSVTAADTAVYYC) are framework-3. Positions 116–117 (AR) are complementarity-determining-3.

Immunoglobulins are composed of two identical heavy chains and two identical light chains; disulfide-linked.

Its subcellular location is the secreted. It is found in the cell membrane. V region of the variable domain of immunoglobulin heavy chains that participates in the antigen recognition. Immunoglobulins, also known as antibodies, are membrane-bound or secreted glycoproteins produced by B lymphocytes. In the recognition phase of humoral immunity, the membrane-bound immunoglobulins serve as receptors which, upon binding of a specific antigen, trigger the clonal expansion and differentiation of B lymphocytes into immunoglobulins-secreting plasma cells. Secreted immunoglobulins mediate the effector phase of humoral immunity, which results in the elimination of bound antigens. The antigen binding site is formed by the variable domain of one heavy chain, together with that of its associated light chain. Thus, each immunoglobulin has two antigen binding sites with remarkable affinity for a particular antigen. The variable domains are assembled by a process called V-(D)-J rearrangement and can then be subjected to somatic hypermutations which, after exposure to antigen and selection, allow affinity maturation for a particular antigen. The polypeptide is Immunoglobulin heavy variable 4-38-2 (Homo sapiens (Human)).